Here is a 310-residue protein sequence, read N- to C-terminus: Acetylglutamate kinase (310 aa).

Residues 70-71, arginine 92, and asparagine 191 contribute to the substrate site; that span reads GG.

Belongs to the acetylglutamate kinase family. ArgB subfamily.

The protein localises to the cytoplasm. It catalyses the reaction N-acetyl-L-glutamate + ATP = N-acetyl-L-glutamyl 5-phosphate + ADP. It participates in amino-acid biosynthesis; L-arginine biosynthesis; N(2)-acetyl-L-ornithine from L-glutamate: step 2/4. Catalyzes the ATP-dependent phosphorylation of N-acetyl-L-glutamate. This chain is Acetylglutamate kinase, found in Corynebacterium diphtheriae (strain ATCC 700971 / NCTC 13129 / Biotype gravis).